We begin with the raw amino-acid sequence, 316 residues long: Probable cell division protein WhiA (316 aa).

A DNA-binding region (H-T-H motif) is located at residues 275 to 309 (TLKELGEMVSGGKISKSGINHRLRKIDEIAEKLRA).

Belongs to the WhiA family.

In terms of biological role, involved in cell division and chromosome segregation. The sequence is that of Probable cell division protein WhiA from Bacillus cereus (strain B4264).